A 185-amino-acid chain; its full sequence is Ribosome-recycling factor (185 aa).

The protein belongs to the RRF family.

Its subcellular location is the cytoplasm. Responsible for the release of ribosomes from messenger RNA at the termination of protein biosynthesis. May increase the efficiency of translation by recycling ribosomes from one round of translation to another. This Roseiflexus castenholzii (strain DSM 13941 / HLO8) protein is Ribosome-recycling factor.